The chain runs to 788 residues: Protein kintoun (788 aa).

3 disordered regions span residues 194–249, 415–438, and 628–754; these read LRKP…SEQD, NNSE…EISP, and HKEH…SSSV. A compositionally biased stretch (basic and acidic residues) spans 225–241; that stretch reads GKEKKDQKRVIKEEHKQ. Polar residues predominate over residues 417 to 427; it reads SEGLTSESNLD. 2 stretches are compositionally biased toward basic and acidic residues: residues 628–644 and 667–682; these read HKEH…DVGV and ENTE…RYEE. Polar residues-rich tracts occupy residues 685–701 and 744–754; these read STSC…QKDS and NFDSRPASSSV.

This sequence belongs to the PIH1 family. Kintoun subfamily.

The protein localises to the cytoplasm. It localises to the dynein axonemal particle. In terms of biological role, required for cytoplasmic pre-assembly of axonemal dyneins, thereby playing a central role in motility in cilia and flagella. Involved in pre-assembly of dynein arm complexes in the cytoplasm before intraflagellar transport loads them for the ciliary compartment. This is Protein kintoun from Xenopus laevis (African clawed frog).